Here is a 3971-residue protein sequence, read N- to C-terminus: Mycosubtilin synthase subunit A (3971 aa).

An acyl-CoA ligase region spans residues 160–479 (EPEADELAFI…ELEDIDLGRV (320 aa)). Positions 578–653 (TPIHEIETAL…DLAAFLVENH (76 aa)) constitute a Carrier 1 domain. O-(pantetheine 4'-phosphoryl)serine is present on serine 613. The Ketosynthase family 3 (KS3) domain occupies 669 to 1092 (SKDIAIIGMS…GTNAHVVLEE (424 aa)). Catalysis depends on for beta-ketoacyl synthase activity residues cysteine 843, histidine 974, and histidine 1014. One can recognise a Carrier 2 domain in the interval 1290–1365 (THIESFLKTV…SVVDYLAENV (76 aa)). Serine 1324 is modified (O-(pantetheine 4'-phosphoryl)serine). A disordered region spans residues 1434-1456 (ESEISQDKTSLSPKSVTAKKNSA). Residues 1440–1456 (DKTSLSPKSVTAKKNSA) are compositionally biased toward polar residues. The interval 1529–1856 (IIAERSDGSR…SYFEQSQVPI (328 aa)) is GSA-AT. An N6-(pyridoxal phosphate)lysine modification is found at lysine 1759. The disordered stretch occupies residues 1921 to 1942 (GGFIPEGPDSPNDGGHKEPETY). The tract at residues 1938 to 2240 (EPETYELSPE…NMVPVKNTAS (303 aa)) is condensation 1. One can recognise a Carrier 3 domain in the interval 2405-2480 (EPENETELQI…ELANFIRGEK (76 aa)). Position 2440 is an O-(pantetheine 4'-phosphoryl)serine (serine 2440). Residues 2492–2781 (QKAFYRTSPA…QTMGIRTKPQ (290 aa)) are condensation 2. The interval 2937–3823 (PHNDTVCQWF…RNHPAGRKIF (887 aa)) is domain 1 (asparagine-activating). Positions 2967 to 3364 (TYGQLNERVN…KVEAVQKAVV (398 aa)) are adenylation 1. Residues 3442-3517 (PPGNEVESKL…QLANMALRME (76 aa)) form the Carrier 4 domain. An O-(pantetheine 4'-phosphoryl)serine modification is found at serine 3477. Residues 3529–3818 (KISYYPVSSA…NTLVIRNHPA (290 aa)) form a condensation 3 region.

This sequence belongs to the ATP-dependent AMP-binding enzyme family. Requires pyridoxal 5'-phosphate as cofactor. The cofactor is pantetheine 4'-phosphate.

This protein is a multifunctional enzyme, able to activate a long chain fatty acid and link it with the amino acid Asn as part of the synthesis of mycosubtilin. The activation sites consist of individual domains. This Bacillus subtilis protein is Mycosubtilin synthase subunit A (mycA).